A 353-amino-acid chain; its full sequence is Lactosylceramide 4-alpha-galactosyltransferase (353 aa).

At 1 to 22 (MSKPPDLLLRLLRGAPRQRVCT) the chain is on the cytoplasmic side. A helical; Signal-anchor for type II membrane protein membrane pass occupies residues 23–43 (LFIIGFKFTFFVSIMIYWHVV). The Lumenal segment spans residues 44-353 (GEPKEKGQLY…TTHEAMKMYL (310 aa)). N-linked (GlcNAc...) asparagine glycosylation is present at Asn121. The DXD motif signature appears at 192–194 (DTD). Asn203 carries N-linked (GlcNAc...) asparagine glycosylation.

This sequence belongs to the glycosyltransferase 32 family. As to expression, ubiquitous. Highly expressed in kidney, heart, spleen, liver, testis and placenta.

Its subcellular location is the golgi apparatus membrane. It catalyses the reaction a beta-D-Gal-(1-&gt;4)-beta-D-Glc-(1&lt;-&gt;1)-Cer(d18:1(4E)) + UDP-alpha-D-galactose = a globoside Gb3Cer (d18:1(4E)) + UDP + H(+). It carries out the reaction a beta-D-Gal-(1&lt;-&gt;1')-ceramide + UDP-alpha-D-galactose = alpha-D-Gal-(1-&gt;4)-beta-D-Gal-(1&lt;-&gt;1')-Cer + UDP + H(+). The protein operates within glycolipid biosynthesis. Catalyzes the transfer of galactose from UDP-alpha-D-galactose to lactosylceramide/beta-D-galactosyl-(1-&gt;4)-beta-D-glucosyl-(1&lt;-&gt;1)-ceramide(d18:1(4E)) to produce globotriaosylceramide/globoside Gb3Cer (d18:1(4E)). Also able to transfer galactose to galactosylceramide/beta-D-Gal-(1&lt;-&gt;1')-Cer. Globoside Gb3Cer is a glycosphingolipid of the globo serie, one of the major types of neutral root structures of glycosphingolipids, that constitute a significant portion of mammalian cell membranes. Globotriaosylceramide/globoside Gb3Cer in blood and tissue cell membranes is the antigen Pk of blood histogroup P. Its function is as follows. (Microbial infection) Globotriaosylceramide is one of the cellular ligands for bacterial verotoxins. The chain is Lactosylceramide 4-alpha-galactosyltransferase (A4GALT) from Homo sapiens (Human).